The following is a 380-amino-acid chain: Cytochrome b (380 aa).

The next 4 helical transmembrane spans lie at 33–53 (FGSL…FLAM), 77–98 (WLIR…YLHV), 113–133 (WNIG…GYVL), and 178–198 (FFAF…LHLL). Positions 83 and 97 each coordinate heme b. Positions 182 and 196 each coordinate heme b. Residue histidine 201 participates in a ubiquinone binding. 4 helical membrane passes run 226 to 246 (YKDL…ALFS), 288 to 308 (LGGV…PLLH), 320 to 340 (LTQI…WIGG), and 347 to 367 (FITV…IFIP).

This sequence belongs to the cytochrome b family. As to quaternary structure, the cytochrome bc1 complex contains 3 respiratory subunits (MT-CYB, CYC1 and UQCRFS1), 2 core proteins (UQCRC1 and UQCRC2) and probably 6 low-molecular weight proteins. Heme b is required as a cofactor.

The protein localises to the mitochondrion inner membrane. Component of the ubiquinol-cytochrome c reductase complex (complex III or cytochrome b-c1 complex) that is part of the mitochondrial respiratory chain. The b-c1 complex mediates electron transfer from ubiquinol to cytochrome c. Contributes to the generation of a proton gradient across the mitochondrial membrane that is then used for ATP synthesis. This Neocyttus rhomboidalis (Spiky oreo dory) protein is Cytochrome b (mt-cyb).